We begin with the raw amino-acid sequence, 109 residues long: Nucleoid-associated protein Ping_2276 (109 aa).

The protein belongs to the YbaB/EbfC family. As to quaternary structure, homodimer.

Its subcellular location is the cytoplasm. It is found in the nucleoid. In terms of biological role, binds to DNA and alters its conformation. May be involved in regulation of gene expression, nucleoid organization and DNA protection. This chain is Nucleoid-associated protein Ping_2276, found in Psychromonas ingrahamii (strain DSM 17664 / CCUG 51855 / 37).